Reading from the N-terminus, the 691-residue chain is L-type lectin-domain containing receptor kinase S.6 (691 aa).

An N-terminal signal peptide occupies residues 1–25; sequence MNHHHYSLVIFHLILFLSLDFPTLS. Residues 26 to 311 are Extracellular-facing; sequence HRFSPPLQNL…VVGLKIPVWS (286 aa). Positions 27–257 are legume-lectin like; sequence RFSPPLQNLT…LHIVERWKFR (231 aa). N-linked (GlcNAc...) asparagine glycans are attached at residues Asn-34 and Asn-89. A helical transmembrane segment spans residues 312-332; the sequence is LLPGLAAIVILVAFIVFSLIC. Residues 333–691 lie on the Cytoplasmic side of the membrane; it reads GKKRISEEAD…PWMTPKSHFS (359 aa). The region spanning 366 to 653 is the Protein kinase domain; it reads FNENAIVGQG…IRGEAPLPVL (288 aa). Residues 372–380 and Lys-394 contribute to the ATP site; that span reads VGQGASATV. Catalysis depends on Asp-500, which acts as the Proton acceptor.

In the C-terminal section; belongs to the protein kinase superfamily. Ser/Thr protein kinase family. This sequence in the N-terminal section; belongs to the leguminous lectin family.

The protein resides in the cell membrane. The catalysed reaction is L-seryl-[protein] + ATP = O-phospho-L-seryl-[protein] + ADP + H(+). It catalyses the reaction L-threonyl-[protein] + ATP = O-phospho-L-threonyl-[protein] + ADP + H(+). Its function is as follows. Involved in resistance response to the pathogenic oomycetes Phytophthora infestans and Phytophthora capsici and to the pathogenic bacteria Pseudomonas syringae. The sequence is that of L-type lectin-domain containing receptor kinase S.6 from Arabidopsis thaliana (Mouse-ear cress).